The sequence spans 296 residues: NAD kinase (296 aa).

Aspartate 72 (proton acceptor) is an active-site residue. NAD(+) is bound by residues 72–73 (DG), 146–147 (ND), arginine 157, lysine 174, aspartate 176, 187–192 (TAYALS), and glutamine 247.

It belongs to the NAD kinase family. The cofactor is a divalent metal cation.

Its subcellular location is the cytoplasm. The enzyme catalyses NAD(+) + ATP = ADP + NADP(+) + H(+). Its function is as follows. Involved in the regulation of the intracellular balance of NAD and NADP, and is a key enzyme in the biosynthesis of NADP. Catalyzes specifically the phosphorylation on 2'-hydroxyl of the adenosine moiety of NAD to yield NADP. In Pseudomonas syringae pv. tomato (strain ATCC BAA-871 / DC3000), this protein is NAD kinase.